A 352-amino-acid chain; its full sequence is C-C chemokine receptor type 5 (352 aa).

Residues 1–30 (MDYQVSSPTYDIDYYTSEPCQKTNVKQIAA) are Extracellular-facing. A Sulfotyrosine modification is found at Tyr-3. O-linked (GalNAc...) serine glycosylation is found at Ser-6 and Ser-7. Sulfotyrosine is present on residues Tyr-10, Tyr-14, and Tyr-15. 2 disulfide bridges follow: Cys-20–Cys-269 and Cys-101–Cys-178. A helical membrane pass occupies residues 31–58 (RLLPPLYSLVFIFGFVGNMLVILILINC). At 59 to 68 (KRLKSMTDIY) the chain is on the cytoplasmic side. Residues 69-89 (LLNLAISDLFFLLTVPFWAHY) form a helical membrane-spanning segment. The Extracellular portion of the chain corresponds to 90 to 102 (AAAQWDFGNTMCQ). Residues 103-124 (LLTGLYFIGFFSGIFFIILLTI) traverse the membrane as a helical segment. Residues 125–141 (DRYLAIVHAVFALKART) are Cytoplasmic-facing. The chain crosses the membrane as a helical span at residues 142 to 166 (VTFGVVTSVITWVVAVFASLPGIIF). At 167-198 (TRSQKEGLHYTCSSHFPYSQYQFWKNFQTLKI) the chain is on the extracellular side. A helical membrane pass occupies residues 199 to 218 (VILGLVLPLLVMVICYSGIL). Residues 219–235 (KTLLRCRNEKKRHRAVR) are Cytoplasmic-facing. Residues 236–260 (LIFTIMIVYFLFWAPYNIVLLLNTF) form a helical membrane-spanning segment. Residues 261–277 (QEFFGLNNCSSSNRLDQ) are Extracellular-facing. The chain crosses the membrane as a helical span at residues 278 to 301 (AMQVTETLGMTHCCINPIIYAFVG). Topologically, residues 302 to 352 (EKFRNYLLVFFQKHIAKRFCKCCSIFQQEAPERASSVYTRSTGEQEISVGL) are cytoplasmic. Residues Cys-321, Cys-323, and Cys-324 are each lipidated (S-palmitoyl cysteine). 4 positions are modified to phosphoserine; by BARK1: Ser-336, Ser-337, Ser-342, and Ser-349.

The protein belongs to the G-protein coupled receptor 1 family. As to quaternary structure, interacts with PRAF2. Efficient ligand binding to CCL3/MIP-1alpha and CCL4/MIP-1beta requires sulfation, O-glycosylation and sialic acid modifications. Glycosylation on Ser-6 is required for efficient binding of CCL4. Interacts with GRK2. Interacts with ARRB1 and ARRB2. Interacts with CNIH4. Interacts with S100A4; this interaction stimulates T-lymphocyte chemotaxis. Post-translationally, sulfated on at least 2 of the N-terminal tyrosines. Sulfation is required for efficient binding of the chemokines, CCL3 and CCL4. In terms of processing, palmitoylation in the C-terminal is important for cell surface expression. Phosphorylation on serine residues in the C-terminal is stimulated by binding CC chemokines especially by APO-RANTES. Post-translationally, O-glycosylated, but not N-glycosylated. Ser-6 appears to be the major site even if Ser-7 may be also O-glycosylated. Also sialylated glycans present which contribute to chemokine binding. Thr-16 and Ser-17 may also be glycosylated and, if so, with small moieties such as a T-antigen.

The protein resides in the cell membrane. In terms of biological role, receptor for a number of inflammatory CC-chemokines including CCL3/MIP-1-alpha, CCL4/MIP-1-beta and RANTES and subsequently transduces a signal by increasing the intracellular calcium ion level. May play a role in the control of granulocytic lineage proliferation or differentiation. Participates in T-lymphocyte migration to the infection site by acting as a chemotactic receptor. This chain is C-C chemokine receptor type 5 (CCR5), found in Gorilla gorilla gorilla (Western lowland gorilla).